The following is a 554-amino-acid chain: MTPAELSAALRDALTAAVAAGELTLDPADVPAEVRVERPKNRDHGDWATSVALQLAKKAGLPPREVAALVQRRLLEVEGVRAVDIAGPGFLNVTLDAAAAGELARSVVEAGPAFGRSATPTGERINLEFVSANPTGPIHLGGTRWAAVGDSLARVLEAAGATVTREYYFNDHGAQIDRFARSLLARANDEPAPEDGYGGDYVTDIAAAVLAEAPGLLDLPREEQQEVFRREGVELMFAEIRQSLAEFGVEFDVYFHEDSLHTSGAVGRAVQKLRDLGRIYEADGATWLRTSDFGDDKDRVVIKSDGHPAYISGDLAYYLDKRERGFDRCVLMLGADHHGYVPRMMAMCAAFGDTPGVNLEILIGQMVNLLKDGVPVRMSKRAGTVVTMEDLVEAVGVDAARYSLVRSSVDSSIDIDLDLLTRRSNDNPVFYVQYAHARTANVAVNAAAAGVRREDAFDPSLLTEETESLLLAALAEFPAVVARAGELREPHRVARYLEELAGRFHKFYDACRVTPRAGEEVTDVHRTRLWLNDATRQVLANGLGLLGVSSPDRM.

Positions 132-142 (ANPTGPIHLGG) match the 'HIGH' region motif.

Belongs to the class-I aminoacyl-tRNA synthetase family. In terms of assembly, monomer.

It is found in the cytoplasm. It carries out the reaction tRNA(Arg) + L-arginine + ATP = L-arginyl-tRNA(Arg) + AMP + diphosphate. This is Arginine--tRNA ligase from Kineococcus radiotolerans (strain ATCC BAA-149 / DSM 14245 / SRS30216).